The primary structure comprises 160 residues: Bacterial microcompartment shell protein PduK (160 aa).

The BMC domain occupies 11–96; that stretch reads SLGLLEVCGL…PGEGILLAET (86 aa).

It belongs to the bacterial microcompartments protein family. In terms of assembly, interacts with shell proteins PduA and PduP and assembly protein PduM. Requires Fe cation as cofactor.

The protein resides in the bacterial microcompartment. Its pathway is polyol metabolism; 1,2-propanediol degradation. Its function is as follows. A minor shell protein of the bacterial microcompartment (BMC) dedicated to 1,2-propanediol (1,2-PD) degradation. The isolated BMC shell component protein ratio for J:A:B':B:K:T:U is approximately 15:10:7:6:1:1:2. Not required for structural integrity of BMCs nor to mitigate propionaldehyde toxicity, it might be involved in spatial organization of BMCs. Functionally, the 1,2-PD-specific bacterial microcompartment (BMC) concentrates low levels of 1,2-PD catabolic enzymes, concentrates volatile reaction intermediates thus enhancing pathway flux and keeps the level of toxic, mutagenic propionaldehyde low. This Salmonella typhimurium (strain LT2 / SGSC1412 / ATCC 700720) protein is Bacterial microcompartment shell protein PduK.